Reading from the N-terminus, the 421-residue chain is Glutamate dehydrogenase (421 aa).

The active site involves Lys105. 220–226 (GYGNAGY) is an NAD(+) binding site.

This sequence belongs to the Glu/Leu/Phe/Val dehydrogenases family. As to quaternary structure, homohexamer.

The protein resides in the cytoplasm. It is found in the chromosome. It carries out the reaction L-glutamate + NAD(+) + H2O = 2-oxoglutarate + NH4(+) + NADH + H(+). The enzyme catalyses L-glutamate + NADP(+) + H2O = 2-oxoglutarate + NH4(+) + NADPH + H(+). In Thermococcus kodakarensis (strain ATCC BAA-918 / JCM 12380 / KOD1) (Pyrococcus kodakaraensis (strain KOD1)), this protein is Glutamate dehydrogenase (gdhA).